Consider the following 513-residue polypeptide: Histidine ammonia-lyase (513 aa).

A cross-link (5-imidazolinone (Ala-Gly)) is located at residues 142 to 144 (ASG). Ser143 is subject to 2,3-didehydroalanine (Ser).

This sequence belongs to the PAL/histidase family. In terms of processing, contains an active site 4-methylidene-imidazol-5-one (MIO), which is formed autocatalytically by cyclization and dehydration of residues Ala-Ser-Gly.

The protein resides in the cytoplasm. It carries out the reaction L-histidine = trans-urocanate + NH4(+). It functions in the pathway amino-acid degradation; L-histidine degradation into L-glutamate; N-formimidoyl-L-glutamate from L-histidine: step 1/3. In Methylobacterium sp. (strain 4-46), this protein is Histidine ammonia-lyase.